The chain runs to 753 residues: Putative cyclic nucleotide-gated ion channel 8 (753 aa).

Residues 1–111 (MYKSQYISGH…DKTLLLWNRM (111 aa)) lie on the Cytoplasmic side of the membrane. A helical transmembrane segment spans residues 112 to 132 (FVISCILAVSVDPLFFYLPIV). Residues 133 to 145 (DNSKNCIGIDSKL) are Extracellular-facing. Residues 146–166 (AVTTTTLRTIIDVFYLTRMAL) traverse the membrane as a helical segment. Over 167–199 (QFRTAYIAPSSRVFGRGELVIDPAKIAERYLTR) the chain is Cytoplasmic. A helical transmembrane segment spans residues 200 to 220 (YFIVDFLAVLPLPQIAVWKFL). The Extracellular portion of the chain corresponds to 221–233 (HGSKGTDVLPTKQ). Residues 234–254 (ALLHIVITQYIPRFVRFIPLT) traverse the membrane as a helical segment. The Cytoplasmic portion of the chain corresponds to 255–274 (SELKKTAGAFAEGAWAGAAY). The chain crosses the membrane as a helical span at residues 275-295 (YLLWYMLASHITGAFWYMLSV). The Extracellular portion of the chain corresponds to 296–402 (ERNDTCLRSA…QGLQTSTYPG (107 aa)). Residues 403–423 (EVLFSIAIAVAGLLLFALLIG) traverse the membrane as a helical segment. Residues 424-753 (NMQTYLQSLT…FEALDTDDLN (330 aa)) lie on the Cytoplasmic side of the membrane. Residues 508-638 (LFAN…TFRF) and E579 each bind a nucleoside 3',5'-cyclic phosphate. A calmodulin-binding region spans residues 624–639 (FRRLHSRQVQQTFRFY). Residues 644–673 (RTWAACFIQAAWRRHLRRKIAELRRKEEEE) form the IQ domain. The interval 731 to 753 (KSLMNLTKPSEPDFEALDTDDLN) is disordered. Residues 742 to 753 (PDFEALDTDDLN) show a composition bias toward acidic residues.

The protein belongs to the cyclic nucleotide-gated cation channel (TC 1.A.1.5) family. As to quaternary structure, homotetramer or heterotetramer.

The protein resides in the cell membrane. Putative cyclic nucleotide-gated ion channel. This chain is Putative cyclic nucleotide-gated ion channel 8 (CNGC8), found in Arabidopsis thaliana (Mouse-ear cress).